Here is a 665-residue protein sequence, read N- to C-terminus: Probable potassium transport system protein Kup 2 (665 aa).

13 helical membrane passes run Gly-13 to Met-33, Ile-55 to Leu-75, Trp-98 to Pro-118, Ile-138 to Phe-158, Ile-167 to Gly-187, Leu-195 to Asn-215, Val-217 to Ser-237, Ser-250 to Leu-270, Phe-295 to Gly-315, Ile-344 to Phe-364, Gly-375 to Leu-395, Ile-400 to Ser-420, and Gly-428 to Phe-448.

The protein belongs to the HAK/KUP transporter (TC 2.A.72) family.

The protein resides in the cell membrane. The catalysed reaction is K(+)(in) + H(+)(in) = K(+)(out) + H(+)(out). Functionally, transport of potassium into the cell. Likely operates as a K(+):H(+) symporter. This chain is Probable potassium transport system protein Kup 2, found in Lactobacillus johnsonii (strain CNCM I-12250 / La1 / NCC 533).